Here is a 106-residue protein sequence, read N- to C-terminus: Small ribosomal subunit protein bS20 (106 aa).

Residues 1-32 (MAQKKPKRNLSALKRHRQSLKRRLRNKAKKSA) form a disordered region.

In terms of assembly, part of the 30S ribosomal subunit.

Functionally, one of the primary rRNA binding proteins, it binds directly to 16S rRNA where it nucleates assembly of the bottom of the body of the 30S subunit, by binding to several RNA helices of the 16S rRNA. This is Small ribosomal subunit protein bS20 (rpsT) from Thermus thermophilus (strain ATCC 27634 / DSM 579 / HB8).